Here is a 303-residue protein sequence, read N- to C-terminus: Acidic endochitinase WIN6.2B (303 aa).

The N-terminal stretch at 1-21 (MSVWAFAFFSLFLSLSVRGSA) is a signal peptide. The 41-residue stretch at 22 to 62 (EQCGQQAGDALCPGGLCCSSYGWCGTTADYCGDGCQSQCDG) folds into the Chitin-binding type-1 domain. Intrachain disulfides connect Cys-24–Cys-39, Cys-33–Cys-45, Cys-38–Cys-52, and Cys-56–Cys-60. Residues 82–303 (DGYLSDIIPE…YGLLGLKDTM (222 aa)) form a chitinase region. The active-site Proton donor is the Glu-150. Cys-253 and Cys-286 are disulfide-bonded.

The protein belongs to the glycosyl hydrolase 19 family. Chitinase class I subfamily.

The catalysed reaction is Random endo-hydrolysis of N-acetyl-beta-D-glucosaminide (1-&gt;4)-beta-linkages in chitin and chitodextrins.. Functionally, defense against chitin-containing fungal pathogens. This Populus trichocarpa (Western balsam poplar) protein is Acidic endochitinase WIN6.2B.